The primary structure comprises 902 residues: Protein translocase subunit SecA (902 aa).

Residues Q87, G105 to T109, and D512 each bind ATP. Residues L851–Q902 are disordered. C886, C888, C897, and H898 together coordinate Zn(2+). Residues K892 to Q902 show a composition bias toward basic residues.

Belongs to the SecA family. As to quaternary structure, monomer and homodimer. Part of the essential Sec protein translocation apparatus which comprises SecA, SecYEG and auxiliary proteins SecDF-YajC and YidC. The cofactor is Zn(2+).

It localises to the cell inner membrane. The protein resides in the cytoplasm. It carries out the reaction ATP + H2O + cellular proteinSide 1 = ADP + phosphate + cellular proteinSide 2.. Functionally, part of the Sec protein translocase complex. Interacts with the SecYEG preprotein conducting channel. Has a central role in coupling the hydrolysis of ATP to the transfer of proteins into and across the cell membrane, serving both as a receptor for the preprotein-SecB complex and as an ATP-driven molecular motor driving the stepwise translocation of polypeptide chains across the membrane. The sequence is that of Protein translocase subunit SecA from Sodalis glossinidius (strain morsitans).